We begin with the raw amino-acid sequence, 331 residues long: D-aspartate oxidase 2 (331 aa).

Aspartate 35, lysine 36, serine 43, and glycine 307 together coordinate FAD.

Belongs to the DAMOX/DASOX family. It depends on FAD as a cofactor.

It localises to the cytoplasm. The enzyme catalyses D-aspartate + O2 + H2O = oxaloacetate + H2O2 + NH4(+). It carries out the reaction D-glutamate + O2 + H2O = H2O2 + 2-oxoglutarate + NH4(+). Selectively catalyzes the oxidative deamination of acidic amino acids. May play a role in the egg-laying events and early development of the worm, in addition to quality control of the germ cells. This chain is D-aspartate oxidase 2, found in Caenorhabditis briggsae.